A 269-amino-acid chain; its full sequence is MEQSVANLVDMRDVSFTRGNRCIFDNISLTVPRGKITAIMGPSGIGKTTLLRLIGGQIAPDHGEILFDGENIPAMSRSRLYTVRKRMSMLFQSGALFTDMNVFDNVAYPLREHTQLPAPLLHSTVMMKLEAVGLRGAAKLMPSELSGGMARRAALARAIALEPDLIMFDEPFVGQDPITMGVLVKLISELNSALGVTCVVVSHDVPEVLSIADHAWILADKKIVAHGSAQALQANPDPRVRQFLDGIADGPVPFRYPAGDYHADLLPGS.

The ABC transporter domain occupies 9–245 (VDMRDVSFTR…PDPRVRQFLD (237 aa)). 41–48 (GPSGIGKT) is a binding site for ATP.

Belongs to the ABC transporter superfamily. MlaF family. The complex is composed of two ATP-binding proteins (MlaF), two transmembrane proteins (MlaE), two cytoplasmic solute-binding proteins (MlaB) and six periplasmic solute-binding proteins (MlaD).

The protein localises to the cell inner membrane. Functionally, part of the ABC transporter complex MlaFEDB, which is involved in a phospholipid transport pathway that maintains lipid asymmetry in the outer membrane by retrograde trafficking of phospholipids from the outer membrane to the inner membrane. Responsible for energy coupling to the transport system. This Escherichia coli O157:H7 protein is Intermembrane phospholipid transport system ATP-binding protein MlaF.